Consider the following 258-residue polypeptide: Ubiquinone/menaquinone biosynthesis C-methyltransferase UbiE (258 aa).

Residues Thr-83, Asp-104, and Asp-130–Ala-131 each bind S-adenosyl-L-methionine.

This sequence belongs to the class I-like SAM-binding methyltransferase superfamily. MenG/UbiE family.

It carries out the reaction a 2-demethylmenaquinol + S-adenosyl-L-methionine = a menaquinol + S-adenosyl-L-homocysteine + H(+). The enzyme catalyses a 2-methoxy-6-(all-trans-polyprenyl)benzene-1,4-diol + S-adenosyl-L-methionine = a 5-methoxy-2-methyl-3-(all-trans-polyprenyl)benzene-1,4-diol + S-adenosyl-L-homocysteine + H(+). It participates in quinol/quinone metabolism; menaquinone biosynthesis; menaquinol from 1,4-dihydroxy-2-naphthoate: step 2/2. Its pathway is cofactor biosynthesis; ubiquinone biosynthesis. Functionally, methyltransferase required for the conversion of demethylmenaquinol (DMKH2) to menaquinol (MKH2) and the conversion of 2-polyprenyl-6-methoxy-1,4-benzoquinol (DDMQH2) to 2-polyprenyl-3-methyl-6-methoxy-1,4-benzoquinol (DMQH2). The protein is Ubiquinone/menaquinone biosynthesis C-methyltransferase UbiE of Bordetella bronchiseptica (strain ATCC BAA-588 / NCTC 13252 / RB50) (Alcaligenes bronchisepticus).